The primary structure comprises 71 residues: Small ribosomal subunit protein bS21 (71 aa).

It belongs to the bacterial ribosomal protein bS21 family.

This Alcanivorax borkumensis (strain ATCC 700651 / DSM 11573 / NCIMB 13689 / SK2) protein is Small ribosomal subunit protein bS21.